We begin with the raw amino-acid sequence, 415 residues long: Gamma-glutamyl phosphate reductase (415 aa).

Belongs to the gamma-glutamyl phosphate reductase family.

The protein localises to the cytoplasm. The enzyme catalyses L-glutamate 5-semialdehyde + phosphate + NADP(+) = L-glutamyl 5-phosphate + NADPH + H(+). It participates in amino-acid biosynthesis; L-proline biosynthesis; L-glutamate 5-semialdehyde from L-glutamate: step 2/2. In terms of biological role, catalyzes the NADPH-dependent reduction of L-glutamate 5-phosphate into L-glutamate 5-semialdehyde and phosphate. The product spontaneously undergoes cyclization to form 1-pyrroline-5-carboxylate. This chain is Gamma-glutamyl phosphate reductase, found in Listeria monocytogenes serovar 1/2a (strain ATCC BAA-679 / EGD-e).